The following is a 186-amino-acid chain: dCTP deaminase (186 aa).

107-112 (KSTYAR) is a binding site for dCTP. Glu133 acts as the Proton donor/acceptor in catalysis. Gln152, Tyr166, Lys175, and Gln176 together coordinate dCTP.

The protein belongs to the dCTP deaminase family. In terms of assembly, homotrimer.

The enzyme catalyses dCTP + H2O + H(+) = dUTP + NH4(+). It functions in the pathway pyrimidine metabolism; dUMP biosynthesis; dUMP from dCTP (dUTP route): step 1/2. Its function is as follows. Catalyzes the deamination of dCTP to dUTP. This chain is dCTP deaminase, found in Wolinella succinogenes (strain ATCC 29543 / DSM 1740 / CCUG 13145 / JCM 31913 / LMG 7466 / NCTC 11488 / FDC 602W) (Vibrio succinogenes).